A 493-amino-acid polypeptide reads, in one-letter code: 6-aminohexanoate-cyclic-dimer hydrolase (493 aa).

Active-site charge relay system residues include Lys72 and Ser150. Ser174 (acyl-ester intermediate) is an active-site residue.

This sequence belongs to the amidase family. Homodimer.

It catalyses the reaction 1,8-diazacyclotetradecane-2,9-dione + H2O = N-(6-aminohexanoyl)-6-aminohexanoate. It participates in xenobiotic degradation; nylon-6 oligomer degradation. In terms of biological role, catalyzes the hydrolysis of 6-aminohexanoic acid cyclic dimer (1,8-diazacyclotetradecane-2,9-dione) to form the linear dimer 6-aminohexanoyl-6-aminohexanoic acid. The sequence is that of 6-aminohexanoate-cyclic-dimer hydrolase (nylA) from Pseudomonas sp. (strain NK87).